A 29-amino-acid polypeptide reads, in one-letter code: Alpha-amylase inhibitor 2 (29 aa).

The protein belongs to the protease inhibitor I6 (cereal trypsin/alpha-amylase inhibitor) family.

It is found in the secreted. In terms of biological role, alpha-amylase inhibitor. The polypeptide is Alpha-amylase inhibitor 2 (Saussurea costus (Costus)).